The sequence spans 176 residues: ATP-dependent protease subunit HslV (176 aa).

The active site involves T6. Residues S161, C164, and T167 each contribute to the Na(+) site.

Belongs to the peptidase T1B family. HslV subfamily. In terms of assembly, a double ring-shaped homohexamer of HslV is capped on each side by a ring-shaped HslU homohexamer. The assembly of the HslU/HslV complex is dependent on binding of ATP.

It localises to the cytoplasm. It catalyses the reaction ATP-dependent cleavage of peptide bonds with broad specificity.. With respect to regulation, allosterically activated by HslU binding. Protease subunit of a proteasome-like degradation complex believed to be a general protein degrading machinery. The sequence is that of ATP-dependent protease subunit HslV from Thermosipho melanesiensis (strain DSM 12029 / CIP 104789 / BI429).